The chain runs to 340 residues: S-adenosylmethionine:tRNA ribosyltransferase-isomerase (340 aa).

This sequence belongs to the QueA family. Monomer.

The protein localises to the cytoplasm. It carries out the reaction 7-aminomethyl-7-carbaguanosine(34) in tRNA + S-adenosyl-L-methionine = epoxyqueuosine(34) in tRNA + adenine + L-methionine + 2 H(+). The protein operates within tRNA modification; tRNA-queuosine biosynthesis. In terms of biological role, transfers and isomerizes the ribose moiety from AdoMet to the 7-aminomethyl group of 7-deazaguanine (preQ1-tRNA) to give epoxyqueuosine (oQ-tRNA). This chain is S-adenosylmethionine:tRNA ribosyltransferase-isomerase, found in Chromobacterium violaceum (strain ATCC 12472 / DSM 30191 / JCM 1249 / CCUG 213 / NBRC 12614 / NCIMB 9131 / NCTC 9757 / MK).